A 447-amino-acid chain; its full sequence is ATP-dependent protease ATPase subunit HslU (447 aa).

ATP contacts are provided by residues isoleucine 17 and 59–64 (GVGKTE). The disordered stretch occupies residues 136 to 160 (PPARGGFQGEPTAEEKPTEKKESAT). Positions 148–159 (AEEKPTEKKESA) are enriched in basic and acidic residues. 3 residues coordinate ATP: aspartate 260, glutamate 325, and arginine 397.

The protein belongs to the ClpX chaperone family. HslU subfamily. A double ring-shaped homohexamer of HslV is capped on each side by a ring-shaped HslU homohexamer. The assembly of the HslU/HslV complex is dependent on binding of ATP.

The protein resides in the cytoplasm. ATPase subunit of a proteasome-like degradation complex; this subunit has chaperone activity. The binding of ATP and its subsequent hydrolysis by HslU are essential for unfolding of protein substrates subsequently hydrolyzed by HslV. HslU recognizes the N-terminal part of its protein substrates and unfolds these before they are guided to HslV for hydrolysis. The chain is ATP-dependent protease ATPase subunit HslU from Coxiella burnetii (strain RSA 331 / Henzerling II).